Consider the following 218-residue polypeptide: Large ribosomal subunit protein uL3 (218 aa).

It belongs to the universal ribosomal protein uL3 family. Part of the 50S ribosomal subunit. Forms a cluster with proteins L14 and L19.

In terms of biological role, one of the primary rRNA binding proteins, it binds directly near the 3'-end of the 23S rRNA, where it nucleates assembly of the 50S subunit. This Rhodococcus jostii (strain RHA1) protein is Large ribosomal subunit protein uL3.